The following is a 436-amino-acid chain: Cysteine--tRNA ligase (436 aa).

Residue C24 participates in Zn(2+) binding. The 'HIGH' region motif lies at 26-36 (PTVYNHIHIGN). The Zn(2+) site is built by C202, H227, and E231. The 'KMSKS' region motif lies at 259 to 263 (KMSKS). Residue K262 coordinates ATP.

Belongs to the class-I aminoacyl-tRNA synthetase family. Monomer. Requires Zn(2+) as cofactor.

The protein localises to the cytoplasm. The enzyme catalyses tRNA(Cys) + L-cysteine + ATP = L-cysteinyl-tRNA(Cys) + AMP + diphosphate. In Ureaplasma parvum serovar 3 (strain ATCC 700970), this protein is Cysteine--tRNA ligase.